The primary structure comprises 154 residues: Deoxyuridine 5'-triphosphate nucleotidohydrolase (154 aa).

Substrate contacts are provided by residues 74-76, Asn-87, 91-93, and Lys-101; these read RSG and TID.

This sequence belongs to the dUTPase family. Requires Mg(2+) as cofactor.

It catalyses the reaction dUTP + H2O = dUMP + diphosphate + H(+). It functions in the pathway pyrimidine metabolism; dUMP biosynthesis; dUMP from dCTP (dUTP route): step 2/2. Functionally, this enzyme is involved in nucleotide metabolism: it produces dUMP, the immediate precursor of thymidine nucleotides and it decreases the intracellular concentration of dUTP so that uracil cannot be incorporated into DNA. The sequence is that of Deoxyuridine 5'-triphosphate nucleotidohydrolase from Cytophaga hutchinsonii (strain ATCC 33406 / DSM 1761 / CIP 103989 / NBRC 15051 / NCIMB 9469 / D465).